A 1416-amino-acid polypeptide reads, in one-letter code: DNA-directed RNA polymerase subunit beta (1416 aa).

The disordered stretch occupies residues 1388-1416 (AKAAREQAEGELGGPLGTPRGAAAEKNTA).

The protein belongs to the RNA polymerase beta chain family. As to quaternary structure, the RNAP catalytic core consists of 2 alpha, 1 beta, 1 beta' and 1 omega subunit. When a sigma factor is associated with the core the holoenzyme is formed, which can initiate transcription.

The catalysed reaction is RNA(n) + a ribonucleoside 5'-triphosphate = RNA(n+1) + diphosphate. In terms of biological role, DNA-dependent RNA polymerase catalyzes the transcription of DNA into RNA using the four ribonucleoside triphosphates as substrates. This chain is DNA-directed RNA polymerase subunit beta, found in Anaeromyxobacter sp. (strain Fw109-5).